The chain runs to 101 residues: Small ribosomal subunit protein uS14 (101 aa).

It belongs to the universal ribosomal protein uS14 family. As to quaternary structure, part of the 30S ribosomal subunit. Contacts proteins S3 and S10.

Functionally, binds 16S rRNA, required for the assembly of 30S particles and may also be responsible for determining the conformation of the 16S rRNA at the A site. In Protochlamydia amoebophila (strain UWE25), this protein is Small ribosomal subunit protein uS14.